The sequence spans 767 residues: Tetratricopeptide repeat protein 16 (767 aa).

TPR repeat units lie at residues 18–51 (VREY…DPKL), 53–85 (DFYV…DPGN), 93–126 (AFVL…QPQN), 128–155 (SFSY…REVK), 208–241 (AKQS…NPLD), 242–275 (PNFF…VTDT), 288–321 (LLTY…EQNE), 322–355 (KGLY…SPLD), and 363–396 (GVLQ…SPQK). A disordered region spans residues 612 to 733 (EVTPAYGQRD…DSLSFSEISS (122 aa)). Residues 684-718 (QRSSQKVTKTPSLTHSTTHSDIGESANDTPGQTPW) are compositionally biased toward polar residues.

This Mus musculus (Mouse) protein is Tetratricopeptide repeat protein 16 (Ttc16).